The following is a 451-amino-acid chain: tRNA-2-methylthio-N(6)-dimethylallyladenosine synthase (451 aa).

An MTTase N-terminal domain is found at 18–134 (ARVYLETYGC…LPNLLDLAES (117 aa)). [4Fe-4S] cluster-binding residues include Cys27, Cys63, Cys97, Cys170, Cys174, and Cys177. The region spanning 156–386 (RKNGHSAFLA…IALQQKISAE (231 aa)) is the Radical SAM core domain. One can recognise a TRAM domain in the interval 389 to 451 (RNDIGNTHEV…TSATLIGNAL (63 aa)).

The protein belongs to the methylthiotransferase family. MiaB subfamily. As to quaternary structure, monomer. Requires [4Fe-4S] cluster as cofactor.

The protein resides in the cytoplasm. The catalysed reaction is N(6)-dimethylallyladenosine(37) in tRNA + (sulfur carrier)-SH + AH2 + 2 S-adenosyl-L-methionine = 2-methylsulfanyl-N(6)-dimethylallyladenosine(37) in tRNA + (sulfur carrier)-H + 5'-deoxyadenosine + L-methionine + A + S-adenosyl-L-homocysteine + 2 H(+). Functionally, catalyzes the methylthiolation of N6-(dimethylallyl)adenosine (i(6)A), leading to the formation of 2-methylthio-N6-(dimethylallyl)adenosine (ms(2)i(6)A) at position 37 in tRNAs that read codons beginning with uridine. The chain is tRNA-2-methylthio-N(6)-dimethylallyladenosine synthase from Chloroherpeton thalassium (strain ATCC 35110 / GB-78).